Consider the following 318-residue polypeptide: Ribosomal protein L11 methyltransferase (318 aa).

S-adenosyl-L-methionine contacts are provided by T159, G180, D202, and N253.

This sequence belongs to the methyltransferase superfamily. PrmA family.

The protein localises to the cytoplasm. The enzyme catalyses L-lysyl-[protein] + 3 S-adenosyl-L-methionine = N(6),N(6),N(6)-trimethyl-L-lysyl-[protein] + 3 S-adenosyl-L-homocysteine + 3 H(+). Functionally, methylates ribosomal protein L11. This chain is Ribosomal protein L11 methyltransferase, found in Lachnospira eligens (strain ATCC 27750 / DSM 3376 / VPI C15-48 / C15-B4) (Eubacterium eligens).